Consider the following 302-residue polypeptide: tRNA pseudouridine synthase B (302 aa).

Residue aspartate 48 is the Nucleophile of the active site.

Belongs to the pseudouridine synthase TruB family. Type 1 subfamily.

It catalyses the reaction uridine(55) in tRNA = pseudouridine(55) in tRNA. In terms of biological role, responsible for synthesis of pseudouridine from uracil-55 in the psi GC loop of transfer RNAs. The sequence is that of tRNA pseudouridine synthase B from Xylella fastidiosa (strain Temecula1 / ATCC 700964).